The chain runs to 86 residues: DNA-directed RNA polymerase subunit omega (86 aa).

Residues 67-76 (SAREHAKESQ) show a composition bias toward basic and acidic residues. Residues 67–86 (SAREHAKESQVSEEEVREES) are disordered. Residues 77-86 (VSEEEVREES) show a composition bias toward acidic residues.

This sequence belongs to the RNA polymerase subunit omega family. The RNAP catalytic core consists of 2 alpha, 1 beta, 1 beta' and 1 omega subunit. When a sigma factor is associated with the core the holoenzyme is formed, which can initiate transcription.

The enzyme catalyses RNA(n) + a ribonucleoside 5'-triphosphate = RNA(n+1) + diphosphate. In terms of biological role, promotes RNA polymerase assembly. Latches the N- and C-terminal regions of the beta' subunit thereby facilitating its interaction with the beta and alpha subunits. This is DNA-directed RNA polymerase subunit omega from Nitrosococcus oceani (strain ATCC 19707 / BCRC 17464 / JCM 30415 / NCIMB 11848 / C-107).